The primary structure comprises 345 residues: cAMP-responsive element modulator (345 aa).

The KID domain maps to 88-147 (VQVAAIAETDESAESEGVIDSHKRREILSRRPSYRKILNELSSDVPGVPKIEEERSEEEG). A phosphoserine mark is found at S102, S129, S271, S274, and S277. The bZIP domain maps to 286–345 (TRKRELRLMKNREAAKECRRRKKEYVKCLESRVAVLEVQNKKLIEELETLKDICSPKTDY). The tract at residues 287–312 (RKRELRLMKNREAAKECRRRKKEYVK) is basic motif. Residues 314–335 (LESRVAVLEVQNKKLIEELETL) form a leucine-zipper region.

Belongs to the bZIP family. In terms of assembly, binds DNA as a dimer. Interacts with FHL5. Interacts with CDC34. May interact with TSSK4. Post-translationally, isoform 9 is ubiquitinated by CDC34 and RAD6B in order to be degraded by the proteasome. Stimulated by phosphorylation. Phosphorylated on Ser-116 by TSSK4 in vitro. In terms of tissue distribution, expressed in testes (round spermatids) (at protein level). Isoform 14 is the major activator form in testes.

It localises to the nucleus. Its subcellular location is the cytoplasm. In terms of biological role, transcriptional regulator that binds the cAMP response element (CRE), a sequence present in many viral and cellular promoters. Isoforms are either transcriptional activators or repressors. Plays a role in spermatogenesis and is involved in spermatid maturation. May play a role in the regulation of the circadian clock: acts as a transcriptional repressor of the core circadian component PER1 by directly binding to cAMP response elements in its promoter. The protein is cAMP-responsive element modulator of Homo sapiens (Human).